The following is a 471-amino-acid chain: 7-hydroxymethyl chlorophyll a reductase, chloroplastic (471 aa).

Residues 1–44 constitute a chloroplast transit peptide; it reads MARCISFLSTSSSLPCATKPPCCSVSSVLPSSPSSHQCRGRKTS.

Belongs to the FrhB family. The cofactor is FAD. Iron-sulfur cluster is required as a cofactor.

It is found in the plastid. The protein localises to the chloroplast. The enzyme catalyses chlorophyll a + 2 oxidized [2Fe-2S]-[ferredoxin] + H2O = 7(1)-hydroxychlorophyll a + 2 reduced [2Fe-2S]-[ferredoxin] + 2 H(+). Probable iron-sulfur flavoprotein that converts 7-hydroxymethyl chlorophyll a to chlorophyll a using ferredoxin as a reducing equivalent. Catalyzes the reduction of a hydroxymethyl group to a methyl group. This Oryza sativa subsp. japonica (Rice) protein is 7-hydroxymethyl chlorophyll a reductase, chloroplastic (HCAR).